Here is a 589-residue protein sequence, read N- to C-terminus: WD repeat-containing protein 26 homolog (589 aa).

Residues 1–57 (MGVVEDTEPPLKRAKRLADEPNGFSANSSVRGSSVNSNSLGDLMARPLPSQGDDETI) are disordered. Residues 25–39 (SANSSVRGSSVNSNS) are compositionally biased toward low complexity. Residues 64-96 (RKSEFVRIITRALYSLGYDKTGAMLEEESGISL) enclose the LisH domain. The region spanning 97–154 (HNSTIKLFLQQVKDGKWDQSVKTLHRIGFPDEKAVKAASFLLLEQKFLEFLKVEKIAD) is the CTLH domain. WD repeat units lie at residues 272–311 (SHTD…HISL), 317–358 (GHHK…HMYE), 360–398 (GGIS…KECW), 401–440 (QRTQ…ERLI), 442–480 (EEDM…KIVS), 484–526 (GHKR…LIVE), and 529–569 (GHAG…QQNQ).

Interacts with RANBPM. As to expression, expressed in roots, leaves and flowers.

It localises to the cytoplasm. Functionally, acts as a component involved in the crosstalk regulation between light, hormone and abiotic stress response. This chain is WD repeat-containing protein 26 homolog, found in Arabidopsis thaliana (Mouse-ear cress).